A 540-amino-acid chain; its full sequence is Chaperonin GroEL (540 aa).

Residues 29-32, 86-90, Gly413, 477-479, and Asp493 each bind ATP; these read TLGP, DGTTT, and DAL.

The protein belongs to the chaperonin (HSP60) family. Forms a cylinder of 14 subunits composed of two heptameric rings stacked back-to-back. Interacts with the co-chaperonin GroES.

It is found in the cytoplasm. The enzyme catalyses ATP + H2O + a folded polypeptide = ADP + phosphate + an unfolded polypeptide.. In terms of biological role, together with its co-chaperonin GroES, plays an essential role in assisting protein folding. The GroEL-GroES system forms a nano-cage that allows encapsulation of the non-native substrate proteins and provides a physical environment optimized to promote and accelerate protein folding. The polypeptide is Chaperonin GroEL (Clostridium botulinum (strain Eklund 17B / Type B)).